The sequence spans 515 residues: 2,3-bisphosphoglycerate-independent phosphoglycerate mutase (515 aa).

Residues aspartate 14 and serine 64 each coordinate Mn(2+). Residue serine 64 is the Phosphoserine intermediate of the active site. Substrate is bound by residues histidine 125, 155 to 156 (RD), arginine 187, arginine 193, 263 to 266 (RADR), and lysine 337. Residues aspartate 404, histidine 408, aspartate 445, histidine 446, and histidine 464 each contribute to the Mn(2+) site.

It belongs to the BPG-independent phosphoglycerate mutase family. In terms of assembly, monomer. The cofactor is Mn(2+).

The enzyme catalyses (2R)-2-phosphoglycerate = (2R)-3-phosphoglycerate. It functions in the pathway carbohydrate degradation; glycolysis; pyruvate from D-glyceraldehyde 3-phosphate: step 3/5. Its function is as follows. Catalyzes the interconversion of 2-phosphoglycerate and 3-phosphoglycerate. The polypeptide is 2,3-bisphosphoglycerate-independent phosphoglycerate mutase (Pseudomonas aeruginosa (strain ATCC 15692 / DSM 22644 / CIP 104116 / JCM 14847 / LMG 12228 / 1C / PRS 101 / PAO1)).